Reading from the N-terminus, the 146-residue chain is Large ribosomal subunit protein bL19 (146 aa).

Belongs to the bacterial ribosomal protein bL19 family.

Its function is as follows. This protein is located at the 30S-50S ribosomal subunit interface and may play a role in the structure and function of the aminoacyl-tRNA binding site. This Bartonella bacilliformis (strain ATCC 35685 / KC583 / Herrer 020/F12,63) protein is Large ribosomal subunit protein bL19.